Reading from the N-terminus, the 210-residue chain is Cell wall protein SRL1 (210 aa).

The first 19 residues, M1–A19, serve as a signal peptide directing secretion. A glycan (N-linked (GlcNAc...) asparagine) is linked at N23. Disordered regions lie at residues S80–T99 and L118–F142. The span at L118 to V127 shows a compositional bias: low complexity. The span at S132–S141 shows a compositional bias: basic and acidic residues. N-linked (GlcNAc...) asparagine glycosylation is found at N174, N200, and N206.

It localises to the secreted. The protein resides in the cell wall. Its subcellular location is the cell surface. Its function is as follows. Required to stabilize the cell wall in the absence of multiple GPI-anchored mannoproteins. The protein is Cell wall protein SRL1 (SRL1) of Saccharomyces cerevisiae (strain ATCC 204508 / S288c) (Baker's yeast).